Reading from the N-terminus, the 205-residue chain is uncharacterized protein (205 aa).

The next 2 membrane-spanning stretches (helical) occupy residues 12–32 and 49–69; these read WQIY…GVGF and WISS…VMSW.

The protein resides in the host membrane. This is an uncharacterized protein from Haemophilus influenzae (Bacteriophage HP1).